Reading from the N-terminus, the 85-residue chain is Large ribosomal subunit protein bL27 (85 aa).

It belongs to the bacterial ribosomal protein bL27 family.

The chain is Large ribosomal subunit protein bL27 from Cellvibrio japonicus (strain Ueda107) (Pseudomonas fluorescens subsp. cellulosa).